The sequence spans 289 residues: ATP synthase gamma chain (289 aa).

Belongs to the ATPase gamma chain family. In terms of assembly, F-type ATPases have 2 components, CF(1) - the catalytic core - and CF(0) - the membrane proton channel. CF(1) has five subunits: alpha(3), beta(3), gamma(1), delta(1), epsilon(1). CF(0) has three main subunits: a, b and c.

It is found in the cell inner membrane. Its function is as follows. Produces ATP from ADP in the presence of a proton gradient across the membrane. The gamma chain is believed to be important in regulating ATPase activity and the flow of protons through the CF(0) complex. The polypeptide is ATP synthase gamma chain (Acinetobacter baylyi (strain ATCC 33305 / BD413 / ADP1)).